The primary structure comprises 261 residues: uncharacterized protein (261 aa).

A divalent metal cation-binding residues include aspartate 43, histidine 45, aspartate 75, asparagine 106, histidine 197, and histidine 199.

Belongs to the metallophosphoesterase superfamily. The cofactor is a divalent metal cation.

This is an uncharacterized protein from Aquifex aeolicus (strain VF5).